The primary structure comprises 171 residues: Putative pre-16S rRNA nuclease (171 aa).

The protein belongs to the YqgF nuclease family.

It localises to the cytoplasm. Its function is as follows. Could be a nuclease involved in processing of the 5'-end of pre-16S rRNA. The protein is Putative pre-16S rRNA nuclease of Corynebacterium diphtheriae (strain ATCC 700971 / NCTC 13129 / Biotype gravis).